We begin with the raw amino-acid sequence, 232 residues long: 5'-methylthioadenosine/S-adenosylhomocysteine nucleosidase (232 aa).

Glu-12 (proton acceptor) is an active-site residue. Residues Gly-78, Ile-152, and Met-173–Glu-174 contribute to the substrate site. The active-site Proton donor is the Asp-197.

It belongs to the PNP/UDP phosphorylase family. MtnN subfamily. Homodimer.

The catalysed reaction is S-adenosyl-L-homocysteine + H2O = S-(5-deoxy-D-ribos-5-yl)-L-homocysteine + adenine. The enzyme catalyses S-methyl-5'-thioadenosine + H2O = 5-(methylsulfanyl)-D-ribose + adenine. It carries out the reaction 5'-deoxyadenosine + H2O = 5-deoxy-D-ribose + adenine. The protein operates within amino-acid biosynthesis; L-methionine biosynthesis via salvage pathway; S-methyl-5-thio-alpha-D-ribose 1-phosphate from S-methyl-5'-thioadenosine (hydrolase route): step 1/2. In terms of biological role, catalyzes the irreversible cleavage of the glycosidic bond in both 5'-methylthioadenosine (MTA) and S-adenosylhomocysteine (SAH/AdoHcy) to adenine and the corresponding thioribose, 5'-methylthioribose and S-ribosylhomocysteine, respectively. Also cleaves 5'-deoxyadenosine, a toxic by-product of radical S-adenosylmethionine (SAM) enzymes, into 5-deoxyribose and adenine. Thus, is required for in vivo function of the radical SAM enzymes biotin synthase and lipoic acid synthase, that are inhibited by 5'-deoxyadenosine accumulation. The sequence is that of 5'-methylthioadenosine/S-adenosylhomocysteine nucleosidase from Salmonella dublin (strain CT_02021853).